The primary structure comprises 277 residues: Urease accessory protein UreD (277 aa).

Belongs to the UreD family. As to quaternary structure, ureD, UreF and UreG form a complex that acts as a GTP-hydrolysis-dependent molecular chaperone, activating the urease apoprotein by helping to assemble the nickel containing metallocenter of UreC. The UreE protein probably delivers the nickel.

It localises to the cytoplasm. In terms of biological role, required for maturation of urease via the functional incorporation of the urease nickel metallocenter. This chain is Urease accessory protein UreD, found in Pseudomonas putida (strain GB-1).